The primary structure comprises 396 residues: Ribosomal RNA large subunit methyltransferase I (396 aa).

The PUA domain maps to 2-81 (SVRLVLAKGR…ESIDIAFFSR (80 aa)).

The protein belongs to the methyltransferase superfamily. RlmI family.

It is found in the cytoplasm. The catalysed reaction is cytidine(1962) in 23S rRNA + S-adenosyl-L-methionine = 5-methylcytidine(1962) in 23S rRNA + S-adenosyl-L-homocysteine + H(+). Specifically methylates the cytosine at position 1962 (m5C1962) of 23S rRNA. The chain is Ribosomal RNA large subunit methyltransferase I from Escherichia coli O157:H7.